Here is a 209-residue protein sequence, read N- to C-terminus: Transcription antitermination protein NusB (209 aa).

This sequence belongs to the NusB family.

In terms of biological role, involved in transcription antitermination. Required for transcription of ribosomal RNA (rRNA) genes. Binds specifically to the boxA antiterminator sequence of the ribosomal RNA (rrn) operons. The polypeptide is Transcription antitermination protein NusB (Cyanothece sp. (strain PCC 7425 / ATCC 29141)).